A 173-amino-acid chain; its full sequence is Mitochondrial import inner membrane translocase subunit TIM22-1 (173 aa).

The N-terminal 18 residues, 1-18 (MADSSAAEPTTGASSPPV), are a transit peptide targeting the mitochondrion. The segment at 1-26 (MADSSAAEPTTGASSPPVASDENSTQ) is disordered. 4 helical membrane-spanning segments follow: residues 52–72 (VTSG…LGAL), 101–119 (SCKT…ECIV), 128–144 (TVNT…SMSA), and 151–168 (ACIG…IEKF).

The protein belongs to the Tim17/Tim22/Tim23 family. Expressed in young cotyledons, roots, flowers and leaves.

The protein resides in the mitochondrion inner membrane. In terms of biological role, essential core component of the TIM22 complex, a complex that mediates the import and insertion of multi-pass transmembrane proteins into the mitochondrial inner membrane. In Arabidopsis thaliana (Mouse-ear cress), this protein is Mitochondrial import inner membrane translocase subunit TIM22-1 (TIM22-1).